The chain runs to 412 residues: Tyrosine--tRNA ligase (412 aa).

Tyr31 lines the L-tyrosine pocket. The 'HIGH' region motif lies at 36-45 (PTAPSLHIGH). L-tyrosine contacts are provided by Tyr162 and Gln166. The short motif at 222–226 (KIGKT) is the 'KMSKS' region element. Lys225 lines the ATP pocket. The region spanning 345 to 411 (KRWLDIVVEL…GKRKKQVIDL (67 aa)) is the S4 RNA-binding domain.

The protein belongs to the class-I aminoacyl-tRNA synthetase family. TyrS type 1 subfamily. As to quaternary structure, homodimer.

The protein localises to the cytoplasm. The enzyme catalyses tRNA(Tyr) + L-tyrosine + ATP = L-tyrosyl-tRNA(Tyr) + AMP + diphosphate + H(+). In terms of biological role, catalyzes the attachment of tyrosine to tRNA(Tyr) in a two-step reaction: tyrosine is first activated by ATP to form Tyr-AMP and then transferred to the acceptor end of tRNA(Tyr). The sequence is that of Tyrosine--tRNA ligase from Chlamydia trachomatis serovar A (strain ATCC VR-571B / DSM 19440 / HAR-13).